The chain runs to 272 residues: Endoplasmic reticulum resident protein 27 (272 aa).

The N-terminal stretch at 1-25 (MKITRSRCLILSFVLVCGLVPEVTA) is a signal peptide. Positions 39-152 (EPIWLTDVPA…WVTEYSPMIA (114 aa)) constitute a Thioredoxin domain. Residues Asn-91 and Asn-100 are each glycosylated (N-linked (GlcNAc...) asparagine). A PDIA3-binding site region spans residues 230–233 (DKWD). Residues 269–272 (KEEL) carry the Prevents secretion from ER motif.

It belongs to the protein disulfide isomerase family. Interacts with PDIA3.

The protein resides in the endoplasmic reticulum lumen. Its function is as follows. Specifically binds unfolded proteins and may recruit protein disulfide isomerase PDIA3 to unfolded substrates. Binds protein substrates via a hydrophobic pocket in the C-terminal domain. May play a role in the unfolded stress response. This Mus musculus (Mouse) protein is Endoplasmic reticulum resident protein 27 (Erp27).